The following is a 217-amino-acid chain: NADH-quinone oxidoreductase subunit I (217 aa).

Residues 22–41 (TTEQYPEEKKETAPRFHGRH) form a disordered region. 2 consecutive 4Fe-4S ferredoxin-type domains span residues 43 to 73 (LNRHPDGLEKCVGCELCAWACPADAIYVEGA) and 89 to 118 (RVYQINYLRCILCGLCIEACPTRALTMSND). [4Fe-4S] cluster-binding residues include cysteine 53, cysteine 56, cysteine 59, cysteine 63, cysteine 98, cysteine 101, cysteine 104, and cysteine 108. Residues 193–217 (ARRTAGEHSRADEVPAHGAGSERPR) form a disordered region.

It belongs to the complex I 23 kDa subunit family. NDH-1 is composed of 14 different subunits. Subunits NuoA, H, J, K, L, M, N constitute the membrane sector of the complex. [4Fe-4S] cluster serves as cofactor.

It is found in the cell membrane. It carries out the reaction a quinone + NADH + 5 H(+)(in) = a quinol + NAD(+) + 4 H(+)(out). NDH-1 shuttles electrons from NADH, via FMN and iron-sulfur (Fe-S) centers, to quinones in the respiratory chain. The immediate electron acceptor for the enzyme in this species is believed to be ubiquinone. Couples the redox reaction to proton translocation (for every two electrons transferred, four hydrogen ions are translocated across the cytoplasmic membrane), and thus conserves the redox energy in a proton gradient. The chain is NADH-quinone oxidoreductase subunit I from Frankia casuarinae (strain DSM 45818 / CECT 9043 / HFP020203 / CcI3).